Here is a 508-residue protein sequence, read N- to C-terminus: Protein FAM217A (508 aa).

It belongs to the FAM217 family.

The protein is Protein FAM217A (FAM217A) of Homo sapiens (Human).